Reading from the N-terminus, the 407-residue chain is Phosphopentomutase (407 aa).

The Mn(2+) site is built by aspartate 11, aspartate 305, histidine 310, aspartate 346, histidine 347, and histidine 358.

The protein belongs to the phosphopentomutase family. It depends on Mn(2+) as a cofactor.

Its subcellular location is the cytoplasm. It catalyses the reaction 2-deoxy-alpha-D-ribose 1-phosphate = 2-deoxy-D-ribose 5-phosphate. The catalysed reaction is alpha-D-ribose 1-phosphate = D-ribose 5-phosphate. It participates in carbohydrate degradation; 2-deoxy-D-ribose 1-phosphate degradation; D-glyceraldehyde 3-phosphate and acetaldehyde from 2-deoxy-alpha-D-ribose 1-phosphate: step 1/2. In terms of biological role, isomerase that catalyzes the conversion of deoxy-ribose 1-phosphate (dRib-1-P) and ribose 1-phosphate (Rib-1-P) to deoxy-ribose 5-phosphate (dRib-5-P) and ribose 5-phosphate (Rib-5-P), respectively. In Legionella pneumophila (strain Lens), this protein is Phosphopentomutase.